A 184-amino-acid chain; its full sequence is Ribosome-recycling factor (184 aa).

The protein belongs to the RRF family.

It is found in the cytoplasm. Functionally, responsible for the release of ribosomes from messenger RNA at the termination of protein biosynthesis. May increase the efficiency of translation by recycling ribosomes from one round of translation to another. In Borrelia garinii subsp. bavariensis (strain ATCC BAA-2496 / DSM 23469 / PBi) (Borreliella bavariensis), this protein is Ribosome-recycling factor.